Consider the following 275-residue polypeptide: DNAEIEKILLEEHEKETHHRRGLRDKRQQSQEKNVIVKVSKKQIEELSKNAKSSSKKSVSSRSEPFNLKSSDPIYSNQYGKFFEITPKKNPQLQDLDIFVNYVEIKEGSLWLPHYNSRAIVIVTVNEGKGDFELVGQRNENQQGLREEDDEEEEQREEETKNQVQSYKAKLTPGDVFVIPAGHPVAVRASSNLNLLGFGINAENNQRNFLAGEEDNVISQIQKQVKDLTFPGSAQEVDRLLENQKQSYFANAQPQQRETRSQEIKEHLYSILGAF.

Residues 1 to 17 are compositionally biased toward basic and acidic residues; the sequence is DNAEIEKILLEEHEKET. Disordered stretches follow at residues 1-71 and 134-164; these read DNAE…LKSS and LVGQ…KNQV. Low complexity predominate over residues 50 to 63; the sequence is NAKSSSKKSVSSRS. The region spanning 66-238 is the Cupin type-1 domain; sequence FNLKSSDPIY…TFPGSAQEVD (173 aa). Positions 147–157 are enriched in acidic residues; the sequence is EEDDEEEEQRE.

It belongs to the 7S seed storage protein family.

It localises to the vacuole. The protein resides in the aleurone grain. In terms of biological role, seed storage protein. The sequence is that of Provicilin from Pisum sativum (Garden pea).